Consider the following 171-residue polypeptide: MNHFELFGLPLQFQLDGSLLSSQFRDLQRQFHPDKFAIASERDRLLAVQKAAQINDAYQVLKNPISRAEYLLVQHGEDIRGEQQTMQDPMFLMEQMELREELEDIADSSDPEDALFAFEGKVSKMYKQQLSAIQQELESEAWLEAADRVRKLKFIAKLKNEIELVEDRLIG.

Residues 2–74 form the J domain; it reads NHFELFGLPL…ISRAEYLLVQ (73 aa).

This sequence belongs to the HscB family. Interacts with HscA and stimulates its ATPase activity.

Functionally, co-chaperone involved in the maturation of iron-sulfur cluster-containing proteins. Seems to help targeting proteins to be folded toward HscA. In Vibrio atlanticus (strain LGP32) (Vibrio splendidus (strain Mel32)), this protein is Co-chaperone protein HscB homolog.